The sequence spans 366 residues: MSDAPLILLAAGGTGGHLFPAEALGVVLMKRGLRVRLVTDSRAMRYSGLFSADMIDVVPSETVRGRTPWALARTGLMLGAGTAKALALMLRLKPAAVVGFGGYPTLPPLFAARALRIPTLIHDSNAVMGRANRLLSKGVTAIATSLPGVLDRDPTLSAKTTTTGTPMRPAILAAAAVPFAPLAAEGPLRLLVVGGSQGARVMADIVPGAIEQLDPALQPRLVLTQQVREEDMARVRAVYDRLKITCELAPFFNDLPARLAASQLVVSRSGAGTVAELAAIGRPSILVPLPGALDQDQFANAGVLADAGGAIRIVQADFTPERLADEIAALAADPQKLTAMVTAARTVGRLDAADRLADLVVKVANI.

UDP-N-acetyl-alpha-D-glucosamine contacts are provided by residues 14 to 16 (TGG), Asn125, Arg168, Ser196, and Gln297.

It belongs to the glycosyltransferase 28 family. MurG subfamily.

It is found in the cell inner membrane. The catalysed reaction is di-trans,octa-cis-undecaprenyl diphospho-N-acetyl-alpha-D-muramoyl-L-alanyl-D-glutamyl-meso-2,6-diaminopimeloyl-D-alanyl-D-alanine + UDP-N-acetyl-alpha-D-glucosamine = di-trans,octa-cis-undecaprenyl diphospho-[N-acetyl-alpha-D-glucosaminyl-(1-&gt;4)]-N-acetyl-alpha-D-muramoyl-L-alanyl-D-glutamyl-meso-2,6-diaminopimeloyl-D-alanyl-D-alanine + UDP + H(+). It functions in the pathway cell wall biogenesis; peptidoglycan biosynthesis. Functionally, cell wall formation. Catalyzes the transfer of a GlcNAc subunit on undecaprenyl-pyrophosphoryl-MurNAc-pentapeptide (lipid intermediate I) to form undecaprenyl-pyrophosphoryl-MurNAc-(pentapeptide)GlcNAc (lipid intermediate II). The sequence is that of UDP-N-acetylglucosamine--N-acetylmuramyl-(pentapeptide) pyrophosphoryl-undecaprenol N-acetylglucosamine transferase from Rhodopseudomonas palustris (strain HaA2).